The sequence spans 539 residues: Chaperonin GroEL (539 aa).

ATP-binding positions include threonine 29–proline 32, aspartate 86–threonine 90, glycine 413, asparagine 477–alanine 479, and aspartate 493.

This sequence belongs to the chaperonin (HSP60) family. In terms of assembly, forms a cylinder of 14 subunits composed of two heptameric rings stacked back-to-back. Interacts with the co-chaperonin GroES.

Its subcellular location is the cytoplasm. The catalysed reaction is ATP + H2O + a folded polypeptide = ADP + phosphate + an unfolded polypeptide.. Its function is as follows. Together with its co-chaperonin GroES, plays an essential role in assisting protein folding. The GroEL-GroES system forms a nano-cage that allows encapsulation of the non-native substrate proteins and provides a physical environment optimized to promote and accelerate protein folding. The chain is Chaperonin GroEL from Leifsonia xyli subsp. xyli (strain CTCB07).